The chain runs to 550 residues: Glucose-6-phosphate isomerase 2 (550 aa).

The Proton donor role is filled by E359. Catalysis depends on residues H390 and K514.

It belongs to the GPI family.

It localises to the cytoplasm. The enzyme catalyses alpha-D-glucose 6-phosphate = beta-D-fructose 6-phosphate. It functions in the pathway carbohydrate biosynthesis; gluconeogenesis. Its pathway is carbohydrate degradation; glycolysis; D-glyceraldehyde 3-phosphate and glycerone phosphate from D-glucose: step 2/4. Its function is as follows. Catalyzes the reversible isomerization of glucose-6-phosphate to fructose-6-phosphate. The sequence is that of Glucose-6-phosphate isomerase 2 from Streptomyces avermitilis (strain ATCC 31267 / DSM 46492 / JCM 5070 / NBRC 14893 / NCIMB 12804 / NRRL 8165 / MA-4680).